Consider the following 79-residue polypeptide: Reactive oxygen species modulator 1 (79 aa).

A helical membrane pass occupies residues 23–43 (FMMGFAVGMAAGALFGTFSCL). The sufficient for antibacterial activity stretch occupies residues 42 to 60 (CLRFGMRGRELMGGVGKTM).

Belongs to the MGR2 family.

The protein resides in the mitochondrion inner membrane. In terms of biological role, has antibacterial activity against a variety of bacteria including S.aureus, P.aeruginosa and M.tuberculosis. Acts by inducing bacterial membrane breakage. Functionally, induces production of reactive oxygen species (ROS) which are necessary for cell proliferation. May play a role in inducing oxidative DNA damage and replicative senescence. May play a role in the coordination of mitochondrial morphology and cell proliferation. The chain is Reactive oxygen species modulator 1 (romo1) from Xenopus tropicalis (Western clawed frog).